Reading from the N-terminus, the 197-residue chain is MFRRATSTFLSRASATRRFSTDVATPATNSSFVEAWRKVSPNIDPPKTPLEFLKTRPPVPSTIPTKLTVNFVLPYSSQLAAKEVDSVIIPATTGEMGVLPGHVATIAELKPGVLTVQEGTDTTKYFVSSGFRFIHANSVADIIAVEAVPVNQLDRDLVQKGLQEFTQKLNSATTDLEKREAQIGIDVDSALNSALTG.

A mitochondrion-targeting transit peptide spans 1–19; it reads MFRRATSTFLSRASATRRF.

This sequence belongs to the ATPase epsilon chain family. F-type ATPases have 2 components, CF(1) - the catalytic core - and CF(0) - the membrane proton channel. CF(1) has five subunits: alpha(3), beta(3), gamma(1), delta(1), epsilon(1). CF(0) has three main subunits: a, b and c.

The protein localises to the mitochondrion. The protein resides in the mitochondrion inner membrane. Its function is as follows. Mitochondrial membrane ATP synthase (F(1)F(0) ATP synthase or Complex V) produces ATP from ADP in the presence of a proton gradient across the membrane which is generated by electron transport complexes of the respiratory chain. F-type ATPases consist of two structural domains, F(1) - containing the extramembraneous catalytic core, and F(0) - containing the membrane proton channel, linked together by a central stalk and a peripheral stalk. During catalysis, ATP turnover in the catalytic domain of F(1) is coupled via a rotary mechanism of the central stalk subunits to proton translocation. Part of the complex F(1) domain and of the central stalk which is part of the complex rotary element. Rotation of the central stalk against the surrounding alpha(3)beta(3) subunits leads to hydrolysis of ATP in three separate catalytic sites on the beta subunits. The sequence is that of ATP synthase subunit delta', mitochondrial from Pisum sativum (Garden pea).